Here is a 419-residue protein sequence, read N- to C-terminus: Gamma-glutamyl phosphate reductase (419 aa).

Belongs to the gamma-glutamyl phosphate reductase family.

The protein resides in the cytoplasm. It catalyses the reaction L-glutamate 5-semialdehyde + phosphate + NADP(+) = L-glutamyl 5-phosphate + NADPH + H(+). The protein operates within amino-acid biosynthesis; L-proline biosynthesis; L-glutamate 5-semialdehyde from L-glutamate: step 2/2. Its function is as follows. Catalyzes the NADPH-dependent reduction of L-glutamate 5-phosphate into L-glutamate 5-semialdehyde and phosphate. The product spontaneously undergoes cyclization to form 1-pyrroline-5-carboxylate. This Oleidesulfovibrio alaskensis (strain ATCC BAA-1058 / DSM 17464 / G20) (Desulfovibrio alaskensis) protein is Gamma-glutamyl phosphate reductase.